The sequence spans 81 residues: MAVKIRLRRMGQKKAPFYRIVVADSRSPRDGRCIEEIGTYDPTKDPSEYHVNEELAKKWLSNGAQPTETVARIFKSAGIEK.

This sequence belongs to the bacterial ribosomal protein bS16 family.

This chain is Small ribosomal subunit protein bS16, found in Agathobacter rectalis (strain ATCC 33656 / DSM 3377 / JCM 17463 / KCTC 5835 / VPI 0990) (Eubacterium rectale).